Here is a 109-residue protein sequence, read N- to C-terminus: MRTISRCRYIRSSAQKLRLVVNTIRGKKVSQALDILKYTNKKSAELVKKTLESAIANAEHNDNSDINNLKIIKIFVDSGPIIKRIMPRAKGRSDKIMKRTSHLTIVVSN.

This sequence belongs to the universal ribosomal protein uL22 family. As to quaternary structure, part of the 50S ribosomal subunit.

In terms of biological role, this protein binds specifically to 23S rRNA; its binding is stimulated by other ribosomal proteins, e.g. L4, L17, and L20. It is important during the early stages of 50S assembly. It makes multiple contacts with different domains of the 23S rRNA in the assembled 50S subunit and ribosome. Its function is as follows. The globular domain of the protein is located near the polypeptide exit tunnel on the outside of the subunit, while an extended beta-hairpin is found that lines the wall of the exit tunnel in the center of the 70S ribosome. In Blochmanniella pennsylvanica (strain BPEN), this protein is Large ribosomal subunit protein uL22.